Consider the following 171-residue polypeptide: Glutamyl-tRNA(Gln) amidotransferase subunit F, mitochondrial (171 aa).

This sequence belongs to the GatF family. Subunit of the heterotrimeric GatFAB amidotransferase (AdT) complex, composed of A, B and F subunits.

The protein localises to the mitochondrion inner membrane. It catalyses the reaction L-glutamyl-tRNA(Gln) + L-glutamine + ATP + H2O = L-glutaminyl-tRNA(Gln) + L-glutamate + ADP + phosphate + H(+). Its function is as follows. Allows the formation of correctly charged Gln-tRNA(Gln) through the transamidation of misacylated Glu-tRNA(Gln) in the mitochondria. The reaction takes place in the presence of glutamine and ATP through an activated gamma-phospho-Glu-tRNA(Gln). Required for proper protein synthesis within the mitochondrion. The chain is Glutamyl-tRNA(Gln) amidotransferase subunit F, mitochondrial from Zygosaccharomyces rouxii (strain ATCC 2623 / CBS 732 / NBRC 1130 / NCYC 568 / NRRL Y-229).